We begin with the raw amino-acid sequence, 989 residues long: Vacuolar membrane protease (989 aa).

Positions 1 to 25 are disordered; that stretch reads MDRQSLRTTLRAMDASNENGSAKGA. Residues 1–41 lie on the Cytoplasmic side of the membrane; that stretch reads MDRQSLRTTLRAMDASNENGSAKGAKKTTIGSFVRWTFGFN. The chain crosses the membrane as a helical span at residues 42–62; that stretch reads SVPLTTLVTITTVLLGLLVYV. Residues 63–383 are Vacuolar-facing; sequence STSVNPPDVT…YLFIILPLQY (321 aa). Zn(2+) is bound by residues histidine 181 and aspartate 193. Glutamate 227 serves as the catalytic Proton acceptor. Position 228 (glutamate 228) interacts with Zn(2+). An N-linked (GlcNAc...) asparagine glycan is attached at asparagine 245. Residues glutamate 253 and histidine 325 each contribute to the Zn(2+) site. A helical transmembrane segment spans residues 384-404; that stretch reads IFVISCLTLAVGPIFVGFLFL. The Cytoplasmic segment spans residues 405-426; that stretch reads LVLRKQINAGTSETILGGWLRS. The chain crosses the membrane as a helical span at residues 427-447; sequence IVSVLVSVVATYFVVETLHLG. The Vacuolar portion of the chain corresponds to 448 to 460; that stretch reads NELYVVRSFYTPL. The chain crosses the membrane as a helical span at residues 461-481; that stretch reads FAGLGTFIFVNYVLLGFFHFV. Over 482-488 the chain is Cytoplasmic; it reads RPVCDQK. The chain crosses the membrane as a helical span at residues 489 to 509; the sequence is LIILLELSVVLWVLLLLSVIH. Residues 510–520 are Vacuolar-facing; the sequence is EATHKATGEYH. Residues 521–541 form a helical membrane-spanning segment; that stretch reads FLILYIVVATASILGLFGHLV. At 542–611 the chain is on the cytoplasmic side; that stretch reads TSTETSTFVE…IAVSMGYDWS (70 aa). Residues 548 to 576 form a disordered region; that stretch reads TFVEGPEDEEDTVDASEATETSPLLPEAS. A compositionally biased stretch (acidic residues) spans 552-561; sequence GPEDEEDTVD. A helical transmembrane segment spans residues 612-632; that stretch reads IQFLLVVPITFFVTFGLAASL. Over 633-648 the chain is Vacuolar; that stretch reads LDGLHQTPLESEKSAD. Residues 649–669 form a helical membrane-spanning segment; the sequence is FVYTTITAMSVLVGITFLPFV. Topologically, residues 670 to 673 are cytoplasmic; that stretch reads HKLQ. A helical transmembrane segment spans residues 674–694; it reads VFVPIVVVGVAVTASFVHILS. Residues 695-989 lie on the Vacuolar side of the membrane; the sequence is PPFSSNAPAK…LVEVSKYVEL (295 aa). Asparagine 745, asparagine 793, and asparagine 822 each carry an N-linked (GlcNAc...) asparagine glycan.

It belongs to the peptidase M28 family. The cofactor is Zn(2+).

It is found in the vacuole membrane. May be involved in vacuolar sorting and osmoregulation. The polypeptide is Vacuolar membrane protease (Yarrowia lipolytica (strain CLIB 122 / E 150) (Yeast)).